Consider the following 212-residue polypeptide: Fibrillarin-like rRNA/tRNA 2'-O-methyltransferase (212 aa).

The disordered stretch occupies residues 1 to 37; it reads MSEPNLPAGVERREIGGETRLATRGPPVYGEPTADGW. S-adenosyl-L-methionine-binding positions include 74 to 75, 90 to 91, 115 to 116, and 136 to 139; these read TT, EF, DA, and DVAT.

The protein belongs to the methyltransferase superfamily. Fibrillarin family. In terms of assembly, interacts with nop5. Component of box C/D small ribonucleoprotein (sRNP) particles that contain rpl7ae, FlpA and nop5, plus a guide RNA.

In terms of biological role, involved in pre-rRNA and tRNA processing. Utilizes the methyl donor S-adenosyl-L-methionine to catalyze the site-specific 2'-hydroxyl methylation of ribose moieties in rRNA and tRNA. Site specificity is provided by a guide RNA that base pairs with the substrate. Methylation occurs at a characteristic distance from the sequence involved in base pairing with the guide RNA. The polypeptide is Fibrillarin-like rRNA/tRNA 2'-O-methyltransferase (Halorubrum lacusprofundi (strain ATCC 49239 / DSM 5036 / JCM 8891 / ACAM 34)).